The primary structure comprises 95 residues: Aspartyl/glutamyl-tRNA(Asn/Gln) amidotransferase subunit C (95 aa).

It belongs to the GatC family. Heterotrimer of A, B and C subunits.

The catalysed reaction is L-glutamyl-tRNA(Gln) + L-glutamine + ATP + H2O = L-glutaminyl-tRNA(Gln) + L-glutamate + ADP + phosphate + H(+). The enzyme catalyses L-aspartyl-tRNA(Asn) + L-glutamine + ATP + H2O = L-asparaginyl-tRNA(Asn) + L-glutamate + ADP + phosphate + 2 H(+). In terms of biological role, allows the formation of correctly charged Asn-tRNA(Asn) or Gln-tRNA(Gln) through the transamidation of misacylated Asp-tRNA(Asn) or Glu-tRNA(Gln) in organisms which lack either or both of asparaginyl-tRNA or glutaminyl-tRNA synthetases. The reaction takes place in the presence of glutamine and ATP through an activated phospho-Asp-tRNA(Asn) or phospho-Glu-tRNA(Gln). The sequence is that of Aspartyl/glutamyl-tRNA(Asn/Gln) amidotransferase subunit C from Bartonella bacilliformis (strain ATCC 35685 / KC583 / Herrer 020/F12,63).